The following is a 107-amino-acid chain: Small ribosomal subunit protein eS25 (107 aa).

Residues 1–35 (MPPKQQLSKAAKAAAAMAGGKKSKKKWSKKSHKDK) are disordered. Residues 8 to 20 (SKAAKAAAAMAGG) are compositionally biased toward low complexity. The segment covering 21–35 (KKSKKKWSKKSHKDK) has biased composition (basic residues).

Belongs to the eukaryotic ribosomal protein eS25 family.

This Candida glabrata (strain ATCC 2001 / BCRC 20586 / JCM 3761 / NBRC 0622 / NRRL Y-65 / CBS 138) (Yeast) protein is Small ribosomal subunit protein eS25 (RPS25).